Consider the following 379-residue polypeptide: Probable tRNA sulfurtransferase (379 aa).

Residues 52-157 (DEFLDKLKFI…RHHAFVFCKI (106 aa)) form the THUMP domain. Residues 175 to 176 (LL), Arg257, Gly279, and Gln288 each bind ATP.

Belongs to the ThiI family.

It is found in the cytoplasm. The enzyme catalyses [ThiI sulfur-carrier protein]-S-sulfanyl-L-cysteine + a uridine in tRNA + 2 reduced [2Fe-2S]-[ferredoxin] + ATP + H(+) = [ThiI sulfur-carrier protein]-L-cysteine + a 4-thiouridine in tRNA + 2 oxidized [2Fe-2S]-[ferredoxin] + AMP + diphosphate. It carries out the reaction [ThiS sulfur-carrier protein]-C-terminal Gly-Gly-AMP + S-sulfanyl-L-cysteinyl-[cysteine desulfurase] + AH2 = [ThiS sulfur-carrier protein]-C-terminal-Gly-aminoethanethioate + L-cysteinyl-[cysteine desulfurase] + A + AMP + 2 H(+). The protein operates within cofactor biosynthesis; thiamine diphosphate biosynthesis. Catalyzes the ATP-dependent transfer of a sulfur to tRNA to produce 4-thiouridine in position 8 of tRNAs, which functions as a near-UV photosensor. Also catalyzes the transfer of sulfur to the sulfur carrier protein ThiS, forming ThiS-thiocarboxylate. This is a step in the synthesis of thiazole, in the thiamine biosynthesis pathway. The sulfur is donated as persulfide by IscS. This chain is Probable tRNA sulfurtransferase, found in Mycoplasmopsis pulmonis (strain UAB CTIP) (Mycoplasma pulmonis).